The chain runs to 460 residues: TNF receptor-associated factor family protein DDB_G0290883 (460 aa).

The RING-type; degenerate zinc finger occupies 27–67 (CPICFEFIYKKQIYQCKSGHHACKECWEKSLETKKECMTCK). 2 TRAF-type zinc fingers span residues 141–194 (SHLI…KKEL) and 196–253 (THYK…SELQ). One can recognise an MATH domain in the interval 320–448 (GYRNKWIISN…DDKLTIEIYI (129 aa)).

Belongs to the TNF receptor-associated factor family. A subfamily.

The protein localises to the cytoplasm. In terms of biological role, probable adapter protein and signal transducer that links members of the tumor necrosis factor receptor family to different signaling pathways by association with the receptor cytoplasmic domain and kinases. In Dictyostelium discoideum (Social amoeba), this protein is TNF receptor-associated factor family protein DDB_G0290883.